We begin with the raw amino-acid sequence, 153 residues long: Cytochrome c-type biogenesis protein CcmE (153 aa).

Residues 1–8 (MTPVQRRR) lie on the Cytoplasmic side of the membrane. Residues 9-29 (LAWVLLALLASGLATALVAMA) form a helical; Signal-anchor for type II membrane protein membrane-spanning segment. Residues 30 to 153 (LERNIAYLYT…DVPVTAPEVR (124 aa)) are Extracellular-facing. Heme-binding residues include histidine 123 and tyrosine 127.

This sequence belongs to the CcmE/CycJ family.

The protein localises to the cell membrane. Its function is as follows. Heme chaperone required for the biogenesis of c-type cytochromes. Transiently binds heme delivered by CcmC and transfers the heme to apo-cytochromes in a process facilitated by CcmF and CcmH. The chain is Cytochrome c-type biogenesis protein CcmE from Stenotrophomonas maltophilia (strain K279a).